The sequence spans 40 residues: MRKFFESWPMAAVLWVWLTAGIIVEFNRFYPDLLFHPMGL.

A helical membrane pass occupies residues 4–24 (FFESWPMAAVLWVWLTAGIIV).

This sequence belongs to the PsaJ family.

It is found in the cellular thylakoid membrane. Its function is as follows. May help in the organization of the PsaE and PsaF subunits. In Prochlorococcus marinus (strain MIT 9313), this protein is Photosystem I reaction center subunit IX.